The chain runs to 396 residues: S-adenosylmethionine synthase (396 aa).

Residue histidine 16 participates in ATP binding. Aspartate 18 is a binding site for Mg(2+). Glutamate 44 is a binding site for K(+). Residues glutamate 57 and glutamine 100 each coordinate L-methionine. The flexible loop stretch occupies residues 100 to 110 (QSVDINQGVDR). ATP contacts are provided by residues 165–167 (DAK), 231–232 (KF), aspartate 240, 246–247 (RK), alanine 263, and lysine 267. Residue aspartate 240 coordinates L-methionine. L-methionine is bound at residue lysine 271.

The protein belongs to the AdoMet synthase family. In terms of assembly, homotetramer; dimer of dimers. It depends on Mg(2+) as a cofactor. K(+) serves as cofactor.

Its subcellular location is the cytoplasm. It carries out the reaction L-methionine + ATP + H2O = S-adenosyl-L-methionine + phosphate + diphosphate. It functions in the pathway amino-acid biosynthesis; S-adenosyl-L-methionine biosynthesis; S-adenosyl-L-methionine from L-methionine: step 1/1. In terms of biological role, catalyzes the formation of S-adenosylmethionine (AdoMet) from methionine and ATP. The overall synthetic reaction is composed of two sequential steps, AdoMet formation and the subsequent tripolyphosphate hydrolysis which occurs prior to release of AdoMet from the enzyme. The sequence is that of S-adenosylmethionine synthase from Azotobacter vinelandii (strain DJ / ATCC BAA-1303).